A 331-amino-acid chain; its full sequence is L-lactate dehydrogenase A chain (331 aa).

Residues 29–57 (GMVGMASAISILLKDLCDELAMVDVMEDK) and arginine 98 each bind NAD(+). Residues arginine 105, asparagine 137, and arginine 168 each contribute to the substrate site. Residue asparagine 137 coordinates NAD(+). The Proton acceptor role is filled by histidine 192. Position 247 (threonine 247) interacts with substrate.

It belongs to the LDH/MDH superfamily. LDH family. In terms of assembly, homotetramer.

Its subcellular location is the cytoplasm. It catalyses the reaction (S)-lactate + NAD(+) = pyruvate + NADH + H(+). It participates in fermentation; pyruvate fermentation to lactate; (S)-lactate from pyruvate: step 1/1. In terms of biological role, interconverts simultaneously and stereospecifically pyruvate and lactate with concomitant interconversion of NADH and NAD(+). The sequence is that of L-lactate dehydrogenase A chain (ldha) from Notothenia angustata (Rockcod).